Here is a 267-residue protein sequence, read N- to C-terminus: Small ribosomal subunit protein uS3 (267 aa).

In terms of domain architecture, KH type-2 spans 38-106 (IRKLLATGME…QVQLNILEVK (69 aa)). The interval 215–267 (TAASAPAGDRDRPRRERPSRPRRSGSTGTTATSTEAGRAATAVVEAPAENQEG) is disordered. Residues 222-233 (GDRDRPRRERPS) are compositionally biased toward basic and acidic residues. Residues 238-256 (SGSTGTTATSTEAGRAATA) show a composition bias toward low complexity.

Belongs to the universal ribosomal protein uS3 family. As to quaternary structure, part of the 30S ribosomal subunit. Forms a tight complex with proteins S10 and S14.

Binds the lower part of the 30S subunit head. Binds mRNA in the 70S ribosome, positioning it for translation. In Nocardia farcinica (strain IFM 10152), this protein is Small ribosomal subunit protein uS3.